The chain runs to 310 residues: Probable deoxyhypusine synthase (310 aa).

Residue Lys284 is the Nucleophile of the active site.

It belongs to the deoxyhypusine synthase family. Requires NAD(+) as cofactor.

It carries out the reaction [eIF5A protein]-L-lysine + spermidine = [eIF5A protein]-deoxyhypusine + propane-1,3-diamine. It participates in protein modification; eIF5A hypusination. Its function is as follows. Catalyzes the NAD-dependent oxidative cleavage of spermidine and the subsequent transfer of the butylamine moiety of spermidine to the epsilon-amino group of a specific lysine residue of the eIF-5A precursor protein to form the intermediate deoxyhypusine residue. The polypeptide is Probable deoxyhypusine synthase (dys) (Thermoplasma volcanium (strain ATCC 51530 / DSM 4299 / JCM 9571 / NBRC 15438 / GSS1)).